The chain runs to 53 residues: Minor histocompatibility protein HMSD variant form (53 aa).

In terms of assembly, ACC-6 forms a complex with MHC HLA-B*4403. In terms of tissue distribution, highly expressed in dendritic cells and primary leukemia cells, especially those of myeloid lineage. ACC-6 expression is limited to cells of the hematopoietic lineage.

This splice variant of HMSD is the precursor of the histocompatibility antigen ACC-6. More generally, minor histocompatibility antigens (mHags) refer to immunogenic peptide which, when complexed with MHC, can generate an immune response after recognition by specific T-cells. The peptides are derived from polymorphic intracellular proteins, which are cleaved by normal pathways of antigen processing. The binding of these peptides to MHC class I or class II molecules and its expression on the cell surface can stimulate T-cell responses and thereby trigger graft rejection or graft-versus-host disease (GVHD) after hematopoietic stem cell transplantation from HLA-identical sibling donor. GVHD is a frequent complication after bone marrow transplantation (BMT), due to mismatch of minor histocompatibility antigen in HLA-matched sibling marrow transplants. However, associated with GVHD, a favorable graft-versus-leukemia (GVL) can be induced by donor-recipient disparities in mHags. ACC-6 is presented to the cell surface by MHC HLA-B*4403. This complex specifically elicits donor-cytotoxic T-lymphocyte (CTL) reactivity against hematologic malignancies after treatment by HLA-identical allogenic BMT. It induces cell recognition and lysis by CTL. Immunogenicity of most autosomal mHags results from single-nucleotide polymorphisms that cause amino-acid substitutions within epitopes, leading to the differential recognition of peptides between donor and recipient. The chain is Minor histocompatibility protein HMSD variant form (HMSD) from Homo sapiens (Human).